Reading from the N-terminus, the 127-residue chain is NADPH-dependent 7-cyano-7-deazaguanine reductase (127 aa).

Cysteine 40 (thioimide intermediate) is an active-site residue. The active-site Proton donor is the aspartate 47. Residues 62–64 (VEL) and 81–82 (HE) each bind substrate.

This sequence belongs to the GTP cyclohydrolase I family. QueF type 1 subfamily.

It localises to the cytoplasm. It carries out the reaction 7-aminomethyl-7-carbaguanine + 2 NADP(+) = 7-cyano-7-deazaguanine + 2 NADPH + 3 H(+). It participates in tRNA modification; tRNA-queuosine biosynthesis. Catalyzes the NADPH-dependent reduction of 7-cyano-7-deazaguanine (preQ0) to 7-aminomethyl-7-deazaguanine (preQ1). This Campylobacter jejuni subsp. jejuni serotype O:2 (strain ATCC 700819 / NCTC 11168) protein is NADPH-dependent 7-cyano-7-deazaguanine reductase.